A 286-amino-acid chain; its full sequence is Protein GrpE (286 aa).

2 disordered regions span residues 1 to 51 and 260 to 286; these read MSED…ETTA and VAAP…QPTT. 2 stretches are compositionally biased toward low complexity: residues 39-50 and 271-286; these read QPSSTPQTPETT and TEST…QPTT.

Belongs to the GrpE family. In terms of assembly, homodimer.

The protein localises to the cytoplasm. Its function is as follows. Participates actively in the response to hyperosmotic and heat shock by preventing the aggregation of stress-denatured proteins, in association with DnaK and GrpE. It is the nucleotide exchange factor for DnaK and may function as a thermosensor. Unfolded proteins bind initially to DnaJ; upon interaction with the DnaJ-bound protein, DnaK hydrolyzes its bound ATP, resulting in the formation of a stable complex. GrpE releases ADP from DnaK; ATP binding to DnaK triggers the release of the substrate protein, thus completing the reaction cycle. Several rounds of ATP-dependent interactions between DnaJ, DnaK and GrpE are required for fully efficient folding. This chain is Protein GrpE, found in Gloeothece citriformis (strain PCC 7424) (Cyanothece sp. (strain PCC 7424)).